The chain runs to 116 residues: Large ribosomal subunit protein uL18 (116 aa).

Belongs to the universal ribosomal protein uL18 family. As to quaternary structure, part of the 50S ribosomal subunit; part of the 5S rRNA/L5/L18/L25 subcomplex. Contacts the 5S and 23S rRNAs.

Functionally, this is one of the proteins that bind and probably mediate the attachment of the 5S RNA into the large ribosomal subunit, where it forms part of the central protuberance. This chain is Large ribosomal subunit protein uL18, found in Shewanella oneidensis (strain ATCC 700550 / JCM 31522 / CIP 106686 / LMG 19005 / NCIMB 14063 / MR-1).